Consider the following 316-residue polypeptide: FAD:protein FMN transferase (316 aa).

Residues Met14, 88–90, and Asp146 each bind FAD; that span reads AFN. Ala149 is a binding site for Mg(2+). Lys152 and Leu231 together coordinate FAD. The Mg(2+) site is built by Asp257 and Thr261.

It belongs to the ApbE family. The cofactor is Mg(2+).

Its subcellular location is the cytoplasm. It catalyses the reaction L-threonyl-[protein] + FAD = FMN-L-threonyl-[protein] + AMP + H(+). In terms of biological role, flavin transferase that catalyzes the transfer of the FMN moiety of FAD and its covalent binding to the hydroxyl group of a threonine residue in a target flavoprotein. Is responsible for the modification of the fumarate reductase KPK_2907. The polypeptide is FAD:protein FMN transferase (Klebsiella pneumoniae (strain 342)).